The sequence spans 122 residues: MKTEKQKLGAVGENLVATHYVRRGYGIVERNVRYPFGELDLIVEDSDGTTVFVEVKTRRGTGFGAAESVTGRKLTRMRRAATTWLQGRHYREIRFDVVTVVIDPTTGGYVLDHFEGVDDGAR.

Belongs to the UPF0102 family.

This chain is UPF0102 protein CE1920, found in Corynebacterium efficiens (strain DSM 44549 / YS-314 / AJ 12310 / JCM 11189 / NBRC 100395).